The chain runs to 341 residues: Homeobox protein mls-2 (341 aa).

Disordered stretches follow at residues 1–78 (MPTS…DSTN) and 139–209 (SNPD…TVFS). Polar residues predominate over residues 64-78 (TTQSSPSASSEDSTN). A compositionally biased stretch (basic and acidic residues) spans 153–166 (KDEKSEGKDGETRD). Residues 201–260 (KKKTRTVFSRSQVSQLEMMFECKRYLSSQERSNLAQKLHLTETQVKIWFQNRRNKFKRQA) constitute a DNA-binding region (homeobox).

Belongs to the HMX homeobox family. Expressed in a subset of head neurons, including AIM and ASK (at protein level).

It localises to the nucleus. Its function is as follows. Transcription factor that binds to the promoter of target genes. Regulates fate specification and/or differentiation of multiple cell types arising from the embryonic mesodermal (M) lineage and the ABp(l/r)paa precursors. In the postembryonic M lineage, regulates cleavage orientation, cell proliferation and cell fate specification. Regulates hlh-1 expression to specify coelomocyte fate in the mesodermal (M) lineage. In AWC neurons, initiates expression of ceh-36, leading to the expression of terminal differentiation genes. Regulates ventral cephalic sheath (CEPsh) glia differentiation and expression of transcription factor hlh-17 in CEPsh glia. Promotes terminal differentiation and morphogenesis of the epithelial duct and pore cells. In the duct cell, cooperates with the EGF-Ras-ERK pathway in turning on the terminal differentiation gene lin-48. The sequence is that of Homeobox protein mls-2 from Caenorhabditis elegans.